A 234-amino-acid chain; its full sequence is MSSGVAARRDAKKLVRSPSGLRMVPEHRAFGSPFGLEEPQWVPDKECPRCMQCDAKFDFITRKHHCRRCGKCFCDRCCSQKVPLRRMCFVDPVRQCADCALVSHREAEFYDKQLKVLLSGATFLVTFGDSEKPETMVCRLSNNQRCLVLDGDSHREIEIAHVCTVQILTEGFTPGAGSTRATGMLLQYTVPGAEAAAQLRLMAGEDASGSKRQAAAWLAAMHKATKLLYESRDQ.

The FYVE-type zinc finger occupies 44–104 (DKECPRCMQC…QCADCALVSH (61 aa)). Zn(2+)-binding residues include C50, C53, C66, C69, C74, C77, C96, and C99. Residues 107–234 (AEFYDKQLKV…TKLLYESRDQ (128 aa)) are PH-like.

As to quaternary structure, interacts with PTK2/FAK1. In terms of tissue distribution, widely expressed.

Its subcellular location is the cell junction. It is found in the focal adhesion. It localises to the cytoplasmic vesicle. The protein resides in the endosome. Functionally, plays a role in cell adhesion, and thereby in cell motility which requires repeated formation and disassembly of focal adhesions. Regulates microtubule-induced PTK2/FAK1 dephosphorylation, an event important for focal adhesion disassembly, as well as integrin beta-1/ITGB1 cell surface expression. The protein is Zinc finger FYVE domain-containing protein 21 (Zfyve21) of Mus musculus (Mouse).